The primary structure comprises 98 residues: Integration host factor subunit alpha (98 aa).

Residues 54 to 74 (LRDKSSRPGRNPKTGESVPVS) form a disordered region.

Belongs to the bacterial histone-like protein family. In terms of assembly, heterodimer of an alpha and a beta chain.

In terms of biological role, this protein is one of the two subunits of integration host factor, a specific DNA-binding protein that functions in genetic recombination as well as in transcriptional and translational control. This chain is Integration host factor subunit alpha (ihfA), found in Pasteurella multocida (strain Pm70).